A 148-amino-acid chain; its full sequence is Oleosin 16 kDa (148 aa).

The tract at residues 1–21 is disordered; sequence MADQHRGVIGGGGYGDRGGQE. A2 is modified (N-acetylalanine). The segment at 2–34 is polar; sequence ADQHRGVIGGGGYGDRGGQEQQEKQPFMMTALK. The segment covering 8 to 17 has biased composition (gly residues); sequence VIGGGGYGDR. Positions 35-106 are hydrophobic; the sequence is TVTAATAGGS…AALSVFSWMY (72 aa). 3 helical membrane passes run 43 to 63, 66 to 86, and 87 to 107; these read GSML…LTVA, VLVI…LMAA, and GFVT…WMYK.

The protein belongs to the oleosin family.

It is found in the lipid droplet. The protein localises to the membrane. Functionally, may have a structural role to stabilize the lipid body during desiccation of the seed by preventing coalescence of the oil. Probably interacts with both lipid and phospholipid moieties of lipid bodies. May also provide recognition signals for specific lipase anchorage in lipolysis during seedling growth. This Oryza sativa subsp. japonica (Rice) protein is Oleosin 16 kDa (OLE16).